A 280-amino-acid chain; its full sequence is Ribosomal RNA small subunit methyltransferase A (280 aa).

Positions 15, 17, 42, 64, 89, and 109 each coordinate S-adenosyl-L-methionine.

This sequence belongs to the class I-like SAM-binding methyltransferase superfamily. rRNA adenine N(6)-methyltransferase family. RsmA subfamily.

It localises to the cytoplasm. It catalyses the reaction adenosine(1518)/adenosine(1519) in 16S rRNA + 4 S-adenosyl-L-methionine = N(6)-dimethyladenosine(1518)/N(6)-dimethyladenosine(1519) in 16S rRNA + 4 S-adenosyl-L-homocysteine + 4 H(+). Its function is as follows. Specifically dimethylates two adjacent adenosines (A1518 and A1519) in the loop of a conserved hairpin near the 3'-end of 16S rRNA in the 30S particle. May play a critical role in biogenesis of 30S subunits. This is Ribosomal RNA small subunit methyltransferase A from Synechococcus sp. (strain WH7803).